The chain runs to 322 residues: Ribonuclease Z (322 aa).

Zn(2+) contacts are provided by His-60, His-62, Asp-64, His-65, His-140, Asp-210, and His-270. Residue Asp-64 is the Proton acceptor of the active site.

This sequence belongs to the RNase Z family. Homodimer. Zn(2+) serves as cofactor.

It catalyses the reaction Endonucleolytic cleavage of RNA, removing extra 3' nucleotides from tRNA precursor, generating 3' termini of tRNAs. A 3'-hydroxy group is left at the tRNA terminus and a 5'-phosphoryl group is left at the trailer molecule.. Functionally, zinc phosphodiesterase, which displays some tRNA 3'-processing endonuclease activity. Probably involved in tRNA maturation, by removing a 3'-trailer from precursor tRNA. The polypeptide is Ribonuclease Z (Methanococcus aeolicus (strain ATCC BAA-1280 / DSM 17508 / OCM 812 / Nankai-3)).